Consider the following 466-residue polypeptide: MITLYNTLTRQKEPFEPLEPGKVKMYVCGPTVYNYIHIGNARPAINYDVVRRYFEYKGYDVNYVSNFTDVDDKLIKRSKELNESVPEIADRYIQAFYEDTGALNVKKATSNPRVMNHMDDIIEFIKDLVDKGYAYESGGDVYFRTRKFEGYGKLSHQSIDDLKVGARIESGEQKEDALDFTLWKKAKPGEISWDSPFGKGRPGWHIECSVMAYNELGETIDIHAGGSDLQFPHHENEIAQSEAHNHAPFANYWMHNGFINIDNEKMSKSLGNFVLVHDIIKEVDPDVLRFFMISVHYRSPINYNMELVESAKSGLERIRNSYQAIEEREAIATDIEDQSEYIEQIDQLLAQFEKVMDDDFNTANAITTWYDLAKLANKYVLENTTSKKVIERFKEVFQIFSDVLGIPLKGKQQDELLDEDIEALIEERNEARKNKDFARADEIRDQLKAQNIILEDTAQGVRFKRG.

Position 28 (Cys-28) interacts with Zn(2+). Residues Pro-30–Asn-40 carry the 'HIGH' region motif. Cys-208, His-233, and Glu-237 together coordinate Zn(2+). The 'KMSKS' region signature appears at Lys-265 to Ser-269. Lys-268 provides a ligand contact to ATP.

Belongs to the class-I aminoacyl-tRNA synthetase family. As to quaternary structure, monomer. Zn(2+) is required as a cofactor.

It is found in the cytoplasm. The catalysed reaction is tRNA(Cys) + L-cysteine + ATP = L-cysteinyl-tRNA(Cys) + AMP + diphosphate. In Staphylococcus carnosus (strain TM300), this protein is Cysteine--tRNA ligase.